A 120-amino-acid chain; its full sequence is Phosphoribosyl-AMP cyclohydrolase (120 aa).

Mg(2+) is bound at residue Asp-75. Residue Cys-76 coordinates Zn(2+). The Mg(2+) site is built by Asp-77 and Asp-79. Zn(2+) is bound by residues Cys-92 and Cys-99.

The protein belongs to the PRA-CH family. Homodimer. Requires Mg(2+) as cofactor. Zn(2+) serves as cofactor.

The protein resides in the cytoplasm. It carries out the reaction 1-(5-phospho-beta-D-ribosyl)-5'-AMP + H2O = 1-(5-phospho-beta-D-ribosyl)-5-[(5-phospho-beta-D-ribosylamino)methylideneamino]imidazole-4-carboxamide. It participates in amino-acid biosynthesis; L-histidine biosynthesis; L-histidine from 5-phospho-alpha-D-ribose 1-diphosphate: step 3/9. Functionally, catalyzes the hydrolysis of the adenine ring of phosphoribosyl-AMP. The chain is Phosphoribosyl-AMP cyclohydrolase from Methanosarcina acetivorans (strain ATCC 35395 / DSM 2834 / JCM 12185 / C2A).